The primary structure comprises 209 residues: Bacteriorhodopsin (209 aa).

Residues 1–17 (LWLGTAGMFLGMLYFIA) form a helical membrane-spanning segment. Over 18-31 (RGWGETDGRRQKFY) the chain is Cytoplasmic. A helical transmembrane segment spans residues 32–50 (IATILITAIAFVNYLAMAL). The Extracellular segment spans residues 51-66 (GFGLTFIEFGGEQHPI). Residues 67–84 (YWARYTDWLFTTPLLLYD) form a helical membrane-spanning segment. Residues 85–95 (LGLLAGADRNT) lie on the Cytoplasmic side of the membrane. Residues 96–115 (IYSLVSLDVLMIGTGVVATL) form a helical membrane-spanning segment. Residues 116 to 128 (SAGSGVLSAGAER) lie on the Extracellular side of the membrane. Residues 129–148 (LVWWGISTAFLLVLLYFLFS) traverse the membrane as a helical segment. The Cytoplasmic segment spans residues 149–166 (SLSGRVANLPSDTRSTFK). A helical membrane pass occupies residues 167 to 185 (TLRNLVTVVWLVYPVWWLV). The Extracellular segment spans residues 186–197 (GSEGLGLVGIGI). Residues 198–209 (ETAGFMVIDLVA) traverse the membrane as a helical segment.

The protein belongs to the archaeal/bacterial/fungal opsin family.

The protein resides in the cell membrane. Functionally, light-driven proton pump. The chain is Bacteriorhodopsin (bop) from Halobacterium halobium (strain shark).